Reading from the N-terminus, the 253-residue chain is Chitooligosaccharide deacetylase (253 aa).

His61 and His126 together coordinate Mg(2+).

It belongs to the YdjC deacetylase family. ChbG subfamily. In terms of assembly, homodimer. Mg(2+) is required as a cofactor.

It is found in the cytoplasm. The catalysed reaction is N,N'-diacetylchitobiose + H2O = N-acetyl-beta-D-glucosaminyl-(1-&gt;4)-D-glucosamine + acetate. The enzyme catalyses diacetylchitobiose-6'-phosphate + H2O = N'-monoacetylchitobiose-6'-phosphate + acetate. It participates in glycan degradation; chitin degradation. In terms of biological role, involved in the degradation of chitin. ChbG is essential for growth on the acetylated chitooligosaccharides chitobiose and chitotriose but is dispensable for growth on cellobiose and chitosan dimer, the deacetylated form of chitobiose. Deacetylation of chitobiose-6-P and chitotriose-6-P is necessary for both the activation of the chb promoter by the regulatory protein ChbR and the hydrolysis of phosphorylated beta-glucosides by the phospho-beta-glucosidase ChbF. Catalyzes the removal of only one acetyl group from chitobiose-6-P to yield monoacetylchitobiose-6-P, the inducer of ChbR and the substrate of ChbF. The sequence is that of Chitooligosaccharide deacetylase from Serratia marcescens.